An 832-amino-acid chain; its full sequence is Cation/H(+) antiporter 21 (832 aa).

A run of 12 helical transmembrane segments spans residues isoleucine 33 to tyrosine 55, leucine 61 to leucine 81, leucine 99 to leucine 119, valine 132 to leucine 152, isoleucine 161 to alanine 181, cysteine 200 to phenylalanine 220, serine 236 to phenylalanine 256, isoleucine 278 to phenylalanine 298, phenylalanine 319 to glycine 339, valine 352 to leucine 372, glycine 379 to alanine 399, and histidine 413 to tyrosine 433. A compositionally biased stretch (polar residues) spans arginine 792 to proline 802. The tract at residues arginine 792–arginine 832 is disordered.

It belongs to the monovalent cation:proton antiporter 2 (CPA2) transporter (TC 2.A.37) family. CHX (TC 2.A.37.4) subfamily. In terms of tissue distribution, specifically expressed in root endodermal cells. Expressed in seedlings, roots, leaves, flowers, flower buds and pollen.

The protein resides in the cell membrane. In terms of biological role, operates as a Na(+)/H(+) antiporter that plays a role in regulation of xylem Na(+) concentration and, consequently, Na(+) accumulation in the leaf. Required for pollen tube guidance, but not for normal pollen development. May also be involved in the development or function of the female gametophyte. The polypeptide is Cation/H(+) antiporter 21 (CHX21) (Arabidopsis thaliana (Mouse-ear cress)).